The primary structure comprises 431 residues: Mevalonate kinase (431 aa).

Residues Lys-13, Ser-139, and 144–150 (GAGLGSS) contribute to the ATP site. Mg(2+)-binding residues include Ser-150 and Glu-198. Asp-209 serves as the catalytic Proton acceptor.

It belongs to the GHMP kinase family. Mevalonate kinase subfamily. In terms of assembly, homodimer.

The protein resides in the cytoplasm. It is found in the cytosol. It carries out the reaction (R)-mevalonate + ATP = (R)-5-phosphomevalonate + ADP + H(+). It functions in the pathway isoprenoid biosynthesis; isopentenyl diphosphate biosynthesis via mevalonate pathway; isopentenyl diphosphate from (R)-mevalonate: step 1/3. Mevalonate kinase; part of the second module of ergosterol biosynthesis pathway that includes the middle steps of the pathway. ERG12 converts mevalonate into 5-phosphomevalonate. The second module is carried out in the vacuole and involves the formation of farnesyl diphosphate, which is also an important intermediate in the biosynthesis of ubiquinone, dolichol, heme and prenylated proteins. Activity by the mevalonate kinase ERG12 first converts mevalonate into 5-phosphomevalonate. 5-phosphomevalonate is then further converted to 5-diphosphomevalonate by the phosphomevalonate kinase ERG8. The diphosphomevalonate decarboxylase MVD then produces isopentenyl diphosphate. The isopentenyl-diphosphate delta-isomerase IDI1 then catalyzes the 1,3-allylic rearrangement of the homoallylic substrate isopentenyl (IPP) to its highly electrophilic allylic isomer, dimethylallyl diphosphate (DMAPP). Finally the farnesyl diphosphate synthase ERG20 catalyzes the sequential condensation of isopentenyl pyrophosphate with dimethylallyl pyrophosphate, and then with the resultant geranylpyrophosphate to the ultimate product farnesyl pyrophosphate. The polypeptide is Mevalonate kinase (Candida albicans (strain SC5314 / ATCC MYA-2876) (Yeast)).